We begin with the raw amino-acid sequence, 131 residues long: Small ribosomal subunit protein uS9 (131 aa).

This sequence belongs to the universal ribosomal protein uS9 family.

The chain is Small ribosomal subunit protein uS9 from Actinobacillus pleuropneumoniae serotype 7 (strain AP76).